The sequence spans 520 residues: Protein root UVB sensitive 4 (520 aa).

The next 2 membrane-spanning stretches (helical) occupy residues Ile-275 to Phe-295 and Leu-301 to Ile-321.

It belongs to the RUS1 family.

Its subcellular location is the membrane. This chain is Protein root UVB sensitive 4, found in Arabidopsis thaliana (Mouse-ear cress).